The following is a 53-amino-acid chain: U1-poneritoxin-Dq5a (53 aa).

Positions 1–23 (MNIRLMFTLIALLVLTVSFSGAN) are cleaved as a signal peptide. 3 disulfides stabilise this stretch: cysteine 25-cysteine 42, cysteine 32-cysteine 47, and cysteine 41-cysteine 52.

As to expression, expressed by the venom gland.

Its subcellular location is the secreted. May have neurotoxic activity. The chain is U1-poneritoxin-Dq5a from Dinoponera quadriceps (South American ant).